Reading from the N-terminus, the 365-residue chain is U1 snRNP-associated protein usp109 (365 aa).

RRM domains are found at residues 3 to 79 (TSLW…VVPE), 86 to 162 (YMLF…SVKS), and 189 to 259 (TAVY…WARP).

As to quaternary structure, component of the U1 snRNP complex.

It localises to the nucleus. In Schizosaccharomyces pombe (strain 972 / ATCC 24843) (Fission yeast), this protein is U1 snRNP-associated protein usp109 (usp109).